A 489-amino-acid chain; its full sequence is Betaine aldehyde dehydrogenase (489 aa).

A K(+)-binding site is contributed by N93. 150 to 152 contributes to the NAD(+) binding site; it reads GAW. The Charge relay system role is filled by K162. An NAD(+)-binding site is contributed by 176-179; sequence KPSE. Residue V180 coordinates K(+). Residue 229 to 232 participates in NAD(+) binding; sequence EVGT. Position 245 (L245) interacts with K(+). Residue E251 is the Proton acceptor of the active site. NAD(+) contacts are provided by G253, C285, and E386. The active-site Nucleophile is C285. Position 285 is a cysteine sulfenic acid (-SOH) (C285). The K(+) site is built by K456 and G459. E463 (charge relay system) is an active-site residue.

Belongs to the aldehyde dehydrogenase family. In terms of assembly, dimer of dimers. It depends on K(+) as a cofactor.

It catalyses the reaction betaine aldehyde + NAD(+) + H2O = glycine betaine + NADH + 2 H(+). Its pathway is amine and polyamine biosynthesis; betaine biosynthesis via choline pathway; betaine from betaine aldehyde: step 1/1. In terms of biological role, involved in the biosynthesis of the osmoprotectant glycine betaine. Catalyzes the irreversible oxidation of betaine aldehyde to the corresponding acid. The polypeptide is Betaine aldehyde dehydrogenase (Chromohalobacter salexigens (strain ATCC BAA-138 / DSM 3043 / CIP 106854 / NCIMB 13768 / 1H11)).